The following is a 277-amino-acid chain: tRNA (guanine-N(7)-)-methyltransferase (277 aa).

The interval 1–37 is disordered; sequence MAGTETGDAAGTEAPQPQKRYYRQRAHSNPMADHTLR. Ser28 carries the post-translational modification Phosphoserine. Residues Gly85, Glu108, Arg110, Asn141, Ala142, and Leu161 each contribute to the S-adenosyl-L-methionine site. Asp164 is a catalytic residue. An alphaC helix region spans residues 165–173; that stretch reads PHFKRTKHK. S-adenosyl-L-methionine-binding residues include Thr239 and Glu241. An alpha6 helix region spans residues 239–247; the sequence is TEEGKKVLR.

It belongs to the class I-like SAM-binding methyltransferase superfamily. TrmB family. Catalytic component of the METTL1-WDR4 complex, composed of METTL1 and WDR4. Phosphorylation at Ser-28 by PKB/AKT1 inactivates its methyltransferase activity via a steric interference mechanism in the active site that locally disrupts the catalytic center. Phosphorylation at Ser-28 does not affect the interaction with WDR4.

The protein resides in the nucleus. It carries out the reaction guanosine(46) in tRNA + S-adenosyl-L-methionine = N(7)-methylguanosine(46) in tRNA + S-adenosyl-L-homocysteine. The catalysed reaction is a guanosine in mRNA + S-adenosyl-L-methionine = an N(7)-methylguanosine in mRNA + S-adenosyl-L-homocysteine. It catalyses the reaction a guanosine in miRNA + S-adenosyl-L-methionine = an N(7)-methylguanosine in miRNA + S-adenosyl-L-homocysteine. Its pathway is tRNA modification; N(7)-methylguanine-tRNA biosynthesis. Its function is as follows. Catalytic component of METTL1-WDR4 methyltransferase complex that mediates the formation of N(7)-methylguanine in a subset of RNA species, such as tRNAs, mRNAs and microRNAs (miRNAs). Catalyzes the formation of N(7)-methylguanine at position 46 (m7G46) in a large subset of tRNAs that contain the 5'-RAGGU-3' motif within the variable loop. M7G46 interacts with C13-G22 in the D-loop to stabilize tRNA tertiary structure and protect tRNAs from decay. Also acts as a methyltransferase for a subset of internal N(7)-methylguanine in mRNAs. Internal N(7)-methylguanine methylation of mRNAs in response to stress promotes their relocalization to stress granules, thereby suppressing their translation. Also methylates a specific subset of miRNAs, such as let-7. N(7)-methylguanine methylation of let-7 miRNA promotes let-7 miRNA processing by disrupting an inhibitory secondary structure within the primary miRNA transcript (pri-miRNA). Acts as a regulator of embryonic stem cell self-renewal and differentiation. This Bos taurus (Bovine) protein is tRNA (guanine-N(7)-)-methyltransferase.